Consider the following 471-residue polypeptide: UDP-glycosyltransferase 1 (471 aa).

The active-site Proton acceptor is the histidine 15. An an anthocyanidin-binding site is contributed by histidine 15. The active-site Charge relay is the aspartate 124. Positions 146, 348, 350, 365, 368, 369, 370, and 373 each coordinate UDP-alpha-D-glucose. Alanine 388 serves as a coordination point for an anthocyanidin. UDP-alpha-D-glucose contacts are provided by glutamate 389 and glutamine 390.

This sequence belongs to the UDP-glycosyltransferase family. In terms of tissue distribution, expressed in roots. Detected in stems and leaves.

It carries out the reaction a 7-hydroxyisoflavone + UDP-alpha-D-glucose = a 7-hydroxyisoflavone 7-O-beta-D-glucoside + UDP + H(+). Isoflavone 7-O-glucosyltransferase converting daidzein to daidzin, genistein to genistin and formononetin to ononin. Shows some activity toward the chalcone isoliquiritigenin, the flavanones liquiritigenin and naringenin, and the flavone apigenin, but not toward cyanidin, luteolin, kaempferol, quercetin, daidzin and puerarin. This is UDP-glycosyltransferase 1 from Pueraria montana var. lobata (Kudzu vine).